The primary structure comprises 57 residues: Large ribosomal subunit protein bL33 (57 aa).

Belongs to the bacterial ribosomal protein bL33 family.

The protein is Large ribosomal subunit protein bL33 of Akkermansia muciniphila (strain ATCC BAA-835 / DSM 22959 / JCM 33894 / BCRC 81048 / CCUG 64013 / CIP 107961 / Muc).